Consider the following 290-residue polypeptide: Syntaxin-1A (290 aa).

Residues 1–21 (MTKDRLAALQAAQSDDEDMPE) form a disordered region. Topologically, residues 1–267 (MTKDRLAALQ…KYQSKARRKK (267 aa)) are cytoplasmic. A t-SNARE coiled-coil homology domain is found at 194 to 256 (LADIEARHAD…QTATQDTKKA (63 aa)). The chain crosses the membrane as a helical; Anchor for type IV membrane protein span at residues 268 to 289 (IWIAICVLIAIIILVVFLAIYL). A topological domain (vesicular) is located at residue T290.

Belongs to the syntaxin family. Post-translationally, (Microbial infection) Targeted and hydrolyzed by the light chain (LC) of P.bifermentans PMP1. Cleavage probably inhibits neurotransmitter release.

The protein localises to the cytoplasmic vesicle. It localises to the secretory vesicle. Its subcellular location is the synaptic vesicle membrane. Plays a critical role in several secretory processes. The protein is Syntaxin-1A of Anopheles gambiae (African malaria mosquito).